Reading from the N-terminus, the 196-residue chain is MAGWWPALSRAARRHPWPTNVLLYGSLVSAGDALQQRLQGREANWRQTRRVATLVVTFHANFNYVWLRLLERALPGRAPHALLAKLLCDQVVGAPIAVSAFYVGMSILQGKDDIFLDLKQKFWNTYLSGLMYWPFVQLTNFSLVPVQWRTAYAGVCGFLWATFICFSQQSGDGTFKSAFTILYTKGTSATEGYPKK.

The Cytoplasmic segment spans residues 1–16 (MAGWWPALSRAARRHP). The segment at 16 to 55 (PWPTNVLLYGSLVSAGDALQQRLQGREANWRQTRRVATLV) is targeting to peroxisomes. Residues 17–34 (WPTNVLLYGSLVSAGDAL) form a helical membrane-spanning segment. Topologically, residues 35–50 (QQRLQGREANWRQTRR) are lumenal. Residues 51–67 (VATLVVTFHANFNYVWL) form a helical membrane-spanning segment. Topologically, residues 68 to 90 (RLLERALPGRAPHALLAKLLCDQ) are cytoplasmic. A helical membrane pass occupies residues 91–108 (VVGAPIAVSAFYVGMSIL). Residues 109 to 150 (QGKDDIFLDLKQKFWNTYLSGLMYWPFVQLTNFSLVPVQWRT) lie on the Lumenal side of the membrane. Residues 151–167 (AYAGVCGFLWATFICFS) form a helical membrane-spanning segment. Residues 168 to 196 (QQSGDGTFKSAFTILYTKGTSATEGYPKK) are Cytoplasmic-facing.

The protein belongs to the peroxisomal membrane protein PXMP2/4 family. As to expression, isoform 1 is detected in the kidney (at protein level). Isoform 1 and isoform 2 are expressed in the kidney, heart, liver, lung, pancreas and skeletal muscle.

It localises to the peroxisome membrane. Participates in reactive oxygen species metabolism by up- or down-regulation of the genes of antioxidant enzymes. Protective against the mitochondrial apoptotic cascade. This is Mpv17-like protein (MPV17L) from Homo sapiens (Human).